Consider the following 246-residue polypeptide: Ribonuclease PH (246 aa).

Phosphate is bound by residues Arg91 and 129-131 (GTR).

Belongs to the RNase PH family. In terms of assembly, homohexameric ring arranged as a trimer of dimers.

The catalysed reaction is tRNA(n+1) + phosphate = tRNA(n) + a ribonucleoside 5'-diphosphate. Its function is as follows. Phosphorolytic 3'-5' exoribonuclease that plays an important role in tRNA 3'-end maturation. Removes nucleotide residues following the 3'-CCA terminus of tRNAs; can also add nucleotides to the ends of RNA molecules by using nucleoside diphosphates as substrates, but this may not be physiologically important. Probably plays a role in initiation of 16S rRNA degradation (leading to ribosome degradation) during starvation. The sequence is that of Ribonuclease PH from Paraburkholderia xenovorans (strain LB400).